A 1037-amino-acid chain; its full sequence is Ephrin type-A receptor 5 (1037 aa).

Residues 1-24 (MRGSGPRGAGRRRPPSGGGDTPIT) form the signal peptide. The segment at 1-24 (MRGSGPRGAGRRRPPSGGGDTPIT) is disordered. Topologically, residues 25–573 (PASLAGCYSA…AASSDQSQIP (549 aa)) are extracellular. Residues 60 to 238 (EVNLLDSRTV…YYKKCPSVVR (179 aa)) enclose the Eph LBD domain. N-linked (GlcNAc...) asparagine glycosylation is found at Asn-264, Asn-299, Asn-369, Asn-423, Asn-436, and Asn-461. Fibronectin type-III domains are found at residues 357-467 (PPSA…TNQA) and 468-562 (APSP…TTPV). A helical transmembrane segment spans residues 574-594 (VIAVSVTVGVILLAVVIGVLL). The Cytoplasmic portion of the chain corresponds to 595–1037 (SGSCCECGCG…VQLVNGMVPL (443 aa)). Phosphotyrosine; by autocatalysis is present on residues Tyr-650 and Tyr-656. The 262-residue stretch at 675–936 (ITIERVIGAG…EIVNMLDKLI (262 aa)) folds into the Protein kinase domain. Residues 681-689 (IGAGEFGEV) and Lys-707 each bind ATP. The Proton acceptor role is filled by Asp-800. Residues Tyr-833 and Tyr-982 each carry the phosphotyrosine; by autocatalysis modification. The SAM domain maps to 965 to 1029 (GAYRSVGEWL…MNSLQEMKVQ (65 aa)). Residues 1035-1037 (VPL) carry the PDZ-binding motif.

This sequence belongs to the protein kinase superfamily. Tyr protein kinase family. Ephrin receptor subfamily. In terms of assembly, heterotetramer upon binding of the ligand. The heterotetramer is composed of an ephrin dimer and a receptor dimer. Oligomerization is probably required to induce biological responses. Interacts (via SAM domain) with SAMD5 (via SAM domain). Phosphorylated. Phosphorylation is stimulated by the ligand EFNA5. Dephosphorylation upon stimulation by glucose, inhibits EPHA5 forward signaling and results in insulin secretion. Almost exclusively expressed in the nervous system in cortical neurons, cerebellar Purkinje cells and pyramidal neurons within the cortex and hippocampus. Display an increasing gradient of expression from the forebrain to hindbrain and spinal cord.

It localises to the cell membrane. The protein resides in the cell projection. The protein localises to the axon. It is found in the dendrite. It carries out the reaction L-tyrosyl-[protein] + ATP = O-phospho-L-tyrosyl-[protein] + ADP + H(+). Receptor tyrosine kinase which binds promiscuously GPI-anchored ephrin-A family ligands residing on adjacent cells, leading to contact-dependent bidirectional signaling into neighboring cells. The signaling pathway downstream of the receptor is referred to as forward signaling while the signaling pathway downstream of the ephrin ligand is referred to as reverse signaling. Among GPI-anchored ephrin-A ligands, EFNA5 most probably constitutes the cognate/functional ligand for EPHA5. Functions as an axon guidance molecule during development and may be involved in the development of the retinotectal, entorhino-hippocampal and hippocamposeptal pathways. Together with EFNA5 plays also a role in synaptic plasticity in adult brain through regulation of synaptogenesis. In addition to its function in the nervous system, the interaction of EPHA5 with EFNA5 mediates communication between pancreatic islet cells to regulate glucose-stimulated insulin secretion. In Homo sapiens (Human), this protein is Ephrin type-A receptor 5 (EPHA5).